We begin with the raw amino-acid sequence, 355 residues long: Guanine nucleotide-binding protein G(i) subunit alpha-2 (355 aa).

G2 carries the N-myristoyl glycine lipid modification. A lipid anchor (S-palmitoyl cysteine) is attached at C3. The G-alpha domain occupies 32-355; that stretch reads REVKLLLLGA…KNNLKDCGLF (324 aa). The segment at 35 to 48 is G1 motif; sequence KLLLLGAGESGKST. Residues 40-47, 176-182, 201-205, 270-273, and A327 contribute to the GTP site; these read GAGESGKS, LRTRVKT, DVGGQ, and NKKD. Mg(2+) is bound by residues S47 and T182. The segment at 174 to 182 is G2 motif; it reads DVLRTRVKT. Residues 197–206 are G3 motif; it reads FKMFDVGGQR. The segment at 266-273 is G4 motif; the sequence is ILFLNKKD. Positions 325-330 are G5 motif; that stretch reads TCATDT.

It belongs to the G-alpha family. G(i/o/t/z) subfamily. In terms of assembly, g proteins are composed of 3 units; alpha, beta and gamma. The alpha chain contains the guanine nucleotide binding site. In this context, interacts with GNB2. Interacts with UNC5B. Interacts with GPSM1. Interacts with RGS12 and RGS14. Interacts (inactive GDP-bound form) with NUCB1 (via GBA motif); the interaction leads to activation of GNAI3. Interacts (inactive GDP-bound form) with CCDC88C/DAPLE (via GBA motif). Interacts (inactive GDP-bound form) with CCDC8A/GIV (via GBA motif). Interacts with CXCR1 and CXCR2.

Its subcellular location is the cytoplasm. The protein resides in the cytoskeleton. It is found in the microtubule organizing center. The protein localises to the centrosome. It localises to the cell membrane. Its subcellular location is the membrane. Guanine nucleotide-binding proteins (G proteins) are involved as modulators or transducers in various transmembrane signaling systems. The G(i) proteins are involved in hormonal regulation of adenylate cyclase: they inhibit the cyclase in response to beta-adrenergic stimuli. May play a role in cell division. In Canis lupus familiaris (Dog), this protein is Guanine nucleotide-binding protein G(i) subunit alpha-2 (GNAI2).